A 368-amino-acid chain; its full sequence is Glutamate 5-kinase 1 (368 aa).

Lys-12 serves as a coordination point for ATP. Ser-52, Asp-135, and Asn-147 together coordinate substrate. ATP-binding positions include 167-168 and 209-215; these read SD and TGGMKTK. Residues 274–348 form the PUA domain; that stretch reads QGEVVVDGSF…DNEQSEFSEK (75 aa).

The protein belongs to the glutamate 5-kinase family.

It localises to the cytoplasm. It catalyses the reaction L-glutamate + ATP = L-glutamyl 5-phosphate + ADP. Its pathway is amino-acid biosynthesis; L-proline biosynthesis; L-glutamate 5-semialdehyde from L-glutamate: step 1/2. In terms of biological role, catalyzes the transfer of a phosphate group to glutamate to form L-glutamate 5-phosphate. This Pseudoalteromonas translucida (strain TAC 125) protein is Glutamate 5-kinase 1.